Consider the following 643-residue polypeptide: Replication protein E1 (643 aa).

Positions 28–58 (THGQRQVSSDEDEDETETGEDLDFIDNRVPG) are disordered. Acidic residues predominate over residues 36-51 (SDEDEDETETGEDLDF). A Nuclear localization signal motif is present at residues 84-86 (KRK). Ser90 and Ser103 each carry phosphoserine; by host. The Nuclear export signal motif lies at 102–111 (LSPRLDAISL). Disordered regions lie at residues 119–138 (KRRL…TQMV) and 143–181 (EEVT…PQSG). The interval 180-346 (SGTDAAGSVL…QTLVGHSMED (167 aa)) is DNA-binding region. The 151-residue stretch at 445-595 (VEFVSFLAAF…FPFASPGEPL (151 aa)) folds into the SF3 helicase domain. An ATP-binding site is contributed by 471-478 (GPADTGKS). Residue Lys552 forms a Glycyl lysine isopeptide (Lys-Gly) (interchain with G-Cter in SUMO) linkage. A disordered region spans residues 617-643 (NSPEEQDDNGNTGEPFRCVPGDVARTV).

The protein belongs to the papillomaviridae E1 protein family. As to quaternary structure, can form hexamers. Interacts with E2 protein; this interaction increases E1 DNA binding specificity. Interacts with host DNA polymerase subunit POLA2. Interacts with host single stranded DNA-binding protein RPA1. Interacts with host TOP1; this interaction stimulates the enzymatic activity of TOP1. Phosphorylated. In terms of processing, sumoylated.

It is found in the host nucleus. It catalyses the reaction Couples ATP hydrolysis with the unwinding of duplex DNA by translocating in the 3'-5' direction.. It carries out the reaction ATP + H2O = ADP + phosphate + H(+). ATP-dependent DNA 3'-5' helicase required for initiation of viral DNA replication. It forms a complex with the viral E2 protein. The E1-E2 complex binds to the replication origin which contains binding sites for both proteins. During the initial step, a dimer of E1 interacts with a dimer of protein E2 leading to a complex that binds the viral origin of replication with high specificity. Then, a second dimer of E1 displaces the E2 dimer in an ATP-dependent manner to form the E1 tetramer. Following this, two E1 monomers are added to each half of the site, which results in the formation of two E1 trimers on the viral ori. Subsequently, two hexamers will be created. The double hexamer acts as a bi-directional helicase machinery and unwinds the viral DNA and then recruits the host DNA polymerase to start replication. The sequence is that of Replication protein E1 from Human papillomavirus type 2a.